The primary structure comprises 181 residues: Regulator of G-protein signaling 10 (181 aa).

Residues 1–32 (MFNRAVSRLSRKRPPSDIHDSDGSSSSSHQSL) form a disordered region. Over residues 23–32 (GSSSSSHQSL) the composition is skewed to low complexity. Residues serine 24 and serine 41 each carry the phosphoserine modification. One can recognise an RGS domain in the interval 41–156 (SLENLLEDPE…LKSDLFLKHK (116 aa)). Cysteine 74 carries the S-palmitoyl cysteine lipid modification. Residues 158 to 181 (TEEEEEDLPDAQTAAKRASRIYNT) form a disordered region. Serine 176 is subject to Phosphoserine.

Interacts with GNAZ, GNAI1 and GNAI3. Associates specifically with the activated, GTP-bound forms of GNAZ and GNAI3.

The protein localises to the cytoplasm. It is found in the cytosol. Its subcellular location is the nucleus. In terms of biological role, regulates G protein-coupled receptor signaling cascades, including signaling downstream of the muscarinic acetylcholine receptor CHRM2. Inhibits signal transduction by increasing the GTPase activity of G protein alpha subunits, thereby driving them into their inactive GDP-bound form. Modulates the activity of potassium channels that are activated in response to CHRM2 signaling. Activity on GNAZ is inhibited by palmitoylation of the G-protein. The chain is Regulator of G-protein signaling 10 (RGS10) from Homo sapiens (Human).